A 454-amino-acid polypeptide reads, in one-letter code: Anthocyanidin 3-O-galactosyltransferase 3GT6 (454 aa).

The signal sequence occupies residues 1–21 (MTNSSKGRHVAVLPFPFSTHA). Residues serine 18 and histidine 20 each contribute to the an anthocyanidin site. Catalysis depends on histidine 20, which acts as the Proton acceptor. Aspartate 117 functions as the Charge relay in the catalytic mechanism. Histidine 148 serves as a coordination point for an anthocyanidin. Alanine 331, glutamine 333, histidine 348, tryptophan 351, asparagine 352, serine 353, and glutamate 356 together coordinate UDP-alpha-D-glucose. Glycine 371 lines the an anthocyanidin pocket. Aspartate 372 is a binding site for UDP-alpha-D-glucose. N-linked (GlcNAc...) asparagine glycosylation occurs at asparagine 441.

It belongs to the UDP-glycosyltransferase family. In terms of assembly, monomer. As to expression, mostly expressed in leaves and flowers and, to a lower extent, in roots. In flowers, mainly observed in petals, stamens and scapes, and at lower levels in pistils and toruses.

It catalyses the reaction cyanidin + UDP-alpha-D-galactose = cyanidin 3-O-beta-D-galactoside + UDP + H(+). The enzyme catalyses cyanidin + UDP-alpha-D-glucose = cyanidin 3-O-beta-D-glucoside + UDP + H(+). It carries out the reaction delphinidin + UDP-alpha-D-glucose = delphinidin 3-O-beta-D-glucoside + UDP. The catalysed reaction is peonidin + UDP-alpha-D-glucose = peonidin 3-O-beta-D-glucoside + UDP. It catalyses the reaction pelargonidin + UDP-alpha-D-glucose = pelargonidin 3-O-beta-D-glucoside + UDP. The enzyme catalyses delphinidin + UDP-alpha-D-galactose = delphinidin 3-O-beta-D-galactoside + UDP + H(+). It carries out the reaction pelargonidin + UDP-alpha-D-galactose = pelargonidin 3-O-beta-D-galactoside betaine + UDP. The catalysed reaction is peonidin + UDP-alpha-D-galactose = peonidin 3-O-beta-D-galactoside + UDP. It catalyses the reaction petunidin + UDP-alpha-D-galactose = petunidin 3-O-beta-D-galactoside + UDP. The enzyme catalyses petunidin + UDP-alpha-D-glucose = petunidin 3-O-beta-D-glucoside + UDP. It carries out the reaction an anthocyanidin + UDP-alpha-D-glucose + H(+) = an anthocyanidin 3-O-beta-D-glucoside + UDP. The catalysed reaction is an anthocyanidin + UDP-alpha-D-galactose = an anthocyanidin 3-O-beta-D-galactoside + UDP. The protein operates within pigment biosynthesis; anthocyanin biosynthesis. Flavonoid 3-O-glycosyltransferase involved in the biosynthesis of anthocyanins conferring flower red/pink colors, mainly anthocyanidin 3-O-glycosides. Catalyzes the addition of UDP-sugar to the 3-OH of anthocyanidin, with a preference for UDP-galactose (UDP-Gal) as sugar donor and cyanidin as substrate; able to use delphinidin, pelargonidin, peonidin and petunidin as substrates in the presence of UDP-Gal, but barely active on malvidin. Can also use UDP-glucose (UDP-Glu) as sugar donor with cyanidin, delphinidin, pelargonidin, peonidin and petunidin as substrates, but not active on malvidin. This is Anthocyanidin 3-O-galactosyltransferase 3GT6 from Rhododendron delavayi (Rhododendron).